A 240-amino-acid polypeptide reads, in one-letter code: MATLFIADLHLQTEEPAIVAGFLRFLAVEARQADALYILGDLFEAWIGDDDPNPLHREMAVAIKSLVDSGVPCFFIHGNRDFLIGKRFARESGMTLLPQEKVLDLYGRNVLIMHGDTLCTDDAGYQAFRAKVHNPWVQRPFLTLPLFIRRRIAARMRAGSKAANSSKSLDIMDVNAQTVVAEMEKHRVQWLIHGHTHRPAVHELSANGQPAFRVVLGAWHHEGSMVKVTPDNVELIAFPL.

Mn(2+)-binding residues include D8, H10, D41, N79, and H114. Substrate is bound at residue N79–R80. Positions 122, 160, 164, 167, and 195 each coordinate substrate. The Mn(2+) site is built by H195 and H197.

The protein belongs to the LpxH family. Mn(2+) is required as a cofactor.

It localises to the cell inner membrane. It catalyses the reaction UDP-2-N,3-O-bis[(3R)-3-hydroxytetradecanoyl]-alpha-D-glucosamine + H2O = 2-N,3-O-bis[(3R)-3-hydroxytetradecanoyl]-alpha-D-glucosaminyl 1-phosphate + UMP + 2 H(+). It participates in glycolipid biosynthesis; lipid IV(A) biosynthesis; lipid IV(A) from (3R)-3-hydroxytetradecanoyl-[acyl-carrier-protein] and UDP-N-acetyl-alpha-D-glucosamine: step 4/6. Hydrolyzes the pyrophosphate bond of UDP-2,3-diacylglucosamine to yield 2,3-diacylglucosamine 1-phosphate (lipid X) and UMP by catalyzing the attack of water at the alpha-P atom. Involved in the biosynthesis of lipid A, a phosphorylated glycolipid that anchors the lipopolysaccharide to the outer membrane of the cell. The polypeptide is UDP-2,3-diacylglucosamine hydrolase (Salmonella typhi).